The following is a 508-amino-acid chain: Putative inorganic phosphate transporter 1-13 (508 aa).

Residues 1–22 (MAGNQQLRVLHALDIARTQLYH) lie on the Cytoplasmic side of the membrane. The helical transmembrane segment at 23-43 (FIAIVIAGMGFFTDAYDLFSI) threads the bilayer. Residues 44 to 64 (SLVADLLGHVYYHGELPRNIH) are Extracellular-facing. Residues 65–85 (AAVTGIALCGTVPGQLVFGWL) traverse the membrane as a helical segment. Topologically, residues 86–93 (GDKMGRKR) are cytoplasmic. A helical transmembrane segment spans residues 94–114 (VYGITLLLMVVSSLASGLSFS). Residues 115 to 117 (KHE) are Extracellular-facing. A helical transmembrane segment spans residues 118-138 (GMNIIAVLCFFRFWLGVSIGG). At 139 to 159 (DYPLSATIMSEYANKRTRGAF) the chain is on the cytoplasmic side. The chain crosses the membrane as a helical span at residues 160 to 180 (IAAVFAMQGFGNLAAGIIGMI). Topologically, residues 181 to 192 (VSAAFKHSSASK) are extracellular. Residues 193 to 213 (IDYAWRIILMFGAIPAALTYH) traverse the membrane as a helical segment. At 214–277 (WRMKMPETAR…FEFLHRHGLH (64 aa)) the chain is on the cytoplasmic side. The helical transmembrane segment at 278–298 (LLGTTVCWFVLDVTFYSLNIF) threads the bilayer. Residues 299–328 (MKNIFTEVGLLPRLDSEYHHTLQRMITMTA) lie on the Extracellular side of the membrane. A helical transmembrane segment spans residues 329–349 (VHTFISLCGALPGYFFTVAFV). Over 350-354 (DRIGR) the chain is Cytoplasmic. A helical transmembrane segment spans residues 355 to 375 (VKIQLIGFTMMTVFMLCLAIP). The Extracellular portion of the chain corresponds to 376–389 (YDQWLRHKNKYGFA). Residues 390–410 (VMYGLTFFFANFGPNTTTFII) form a helical membrane-spanning segment. Residues 411–424 (PAEIFPARLRSTCH) are Cytoplasmic-facing. A helical transmembrane segment spans residues 425–445 (GISGAVGKIGAIVGVFGFLYT). Over 446–450 (EYHIR) the chain is Extracellular. The chain crosses the membrane as a helical span at residues 451-471 (IFLFVLIGCNLVGFIFTLLLP). At 472 to 508 (ESKGKSLEDLTGEIEEFQEEDEGSEVALSRPIHTVPL) the chain is on the cytoplasmic side.

The protein belongs to the major facilitator superfamily. Phosphate:H(+) symporter (TC 2.A.1.9) family.

The protein localises to the membrane. Functionally, high-affinity transporter for external inorganic phosphate. The chain is Putative inorganic phosphate transporter 1-13 (PHT1-13) from Oryza sativa subsp. japonica (Rice).